Here is a 235-residue protein sequence, read N- to C-terminus: Leucyl/phenylalanyl-tRNA--protein transferase (235 aa).

Belongs to the L/F-transferase family.

The protein localises to the cytoplasm. It catalyses the reaction N-terminal L-lysyl-[protein] + L-leucyl-tRNA(Leu) = N-terminal L-leucyl-L-lysyl-[protein] + tRNA(Leu) + H(+). The enzyme catalyses N-terminal L-arginyl-[protein] + L-leucyl-tRNA(Leu) = N-terminal L-leucyl-L-arginyl-[protein] + tRNA(Leu) + H(+). The catalysed reaction is L-phenylalanyl-tRNA(Phe) + an N-terminal L-alpha-aminoacyl-[protein] = an N-terminal L-phenylalanyl-L-alpha-aminoacyl-[protein] + tRNA(Phe). Functions in the N-end rule pathway of protein degradation where it conjugates Leu, Phe and, less efficiently, Met from aminoacyl-tRNAs to the N-termini of proteins containing an N-terminal arginine or lysine. This is Leucyl/phenylalanyl-tRNA--protein transferase from Aeromonas hydrophila subsp. hydrophila (strain ATCC 7966 / DSM 30187 / BCRC 13018 / CCUG 14551 / JCM 1027 / KCTC 2358 / NCIMB 9240 / NCTC 8049).